A 443-amino-acid polypeptide reads, in one-letter code: NADH-quinone oxidoreductase subunit D 1 (443 aa).

This sequence belongs to the complex I 49 kDa subunit family. NDH-1 is composed of 14 different subunits. Subunits NuoB, C, D, E, F, and G constitute the peripheral sector of the complex.

Its subcellular location is the cell membrane. The enzyme catalyses a quinone + NADH + 5 H(+)(in) = a quinol + NAD(+) + 4 H(+)(out). Functionally, NDH-1 shuttles electrons from NADH, via FMN and iron-sulfur (Fe-S) centers, to quinones in the respiratory chain. The immediate electron acceptor for the enzyme in this species is believed to be a menaquinone. Couples the redox reaction to proton translocation (for every two electrons transferred, four hydrogen ions are translocated across the cytoplasmic membrane), and thus conserves the redox energy in a proton gradient. The polypeptide is NADH-quinone oxidoreductase subunit D 1 (Streptomyces avermitilis (strain ATCC 31267 / DSM 46492 / JCM 5070 / NBRC 14893 / NCIMB 12804 / NRRL 8165 / MA-4680)).